We begin with the raw amino-acid sequence, 778 residues long: Semaphorin-3ab (778 aa).

A signal peptide spans 1–17; it reads MDYLWWIVLLIWTLIAP. In terms of domain architecture, Sema spans 32–515; the sequence is RLKPSYKEML…SAIGVSQMPL (484 aa). N-linked (GlcNAc...) asparagine glycosylation occurs at Asn54. Cys105 and Cys116 form a disulfide bridge. A glycan (N-linked (GlcNAc...) asparagine) is linked at Asn127. 4 cysteine pairs are disulfide-bonded: Cys134–Cys143, Cys270–Cys382, Cys294–Cys342, and Cys518–Cys536. Positions 579–668 constitute an Ig-like C2-type domain; the sequence is GEAGLLDKTV…FIQTLLRLTL (90 aa). N-linked (GlcNAc...) asparagine glycosylation is present at Asn593. A disulfide bridge links Cys652 with Cys716. Residues 727 to 778 form a disordered region; that stretch reads RRQKANLLHASQSHTSQILHSSQSHAKWKLLQENKKGRNRRTHEMQRAPRSV. The span at 735 to 751 shows a compositional bias: polar residues; sequence HASQSHTSQILHSSQSH. Positions 756-778 are enriched in basic and acidic residues; that stretch reads LLQENKKGRNRRTHEMQRAPRSV.

The protein belongs to the semaphorin family. Expressed in rhombomeres three and five, and in the posterior half of newly formed somites which is avoided by ventrally extending motor axons.

It localises to the secreted. Might normally influence the midsegmental pathway choice of the ventrally extending motor axons by contributing to a repulsive domain in the posterior somite. The polypeptide is Semaphorin-3ab (sema3ab) (Danio rerio (Zebrafish)).